A 954-amino-acid polypeptide reads, in one-letter code: Glycine dehydrogenase (decarboxylating) (954 aa).

Lys-704 is modified (N6-(pyridoxal phosphate)lysine).

Belongs to the GcvP family. In terms of assembly, the glycine cleavage system is composed of four proteins: P, T, L and H. Pyridoxal 5'-phosphate is required as a cofactor.

It carries out the reaction N(6)-[(R)-lipoyl]-L-lysyl-[glycine-cleavage complex H protein] + glycine + H(+) = N(6)-[(R)-S(8)-aminomethyldihydrolipoyl]-L-lysyl-[glycine-cleavage complex H protein] + CO2. The glycine cleavage system catalyzes the degradation of glycine. The P protein binds the alpha-amino group of glycine through its pyridoxal phosphate cofactor; CO(2) is released and the remaining methylamine moiety is then transferred to the lipoamide cofactor of the H protein. The protein is Glycine dehydrogenase (decarboxylating) of Sinorhizobium medicae (strain WSM419) (Ensifer medicae).